Reading from the N-terminus, the 229-residue chain is Potassium/proton antiporter CemA (229 aa).

4 helical membrane passes run 7–27 (FTPL…SLSF), 114–134 (LICF…LLIL), 154–174 (ILLL…ELMI), and 189–209 (IISG…KYWI).

This sequence belongs to the CemA family.

The protein localises to the plastid. Its subcellular location is the chloroplast inner membrane. The enzyme catalyses K(+)(in) + H(+)(out) = K(+)(out) + H(+)(in). Contributes to K(+)/H(+) antiport activity by supporting proton efflux to control proton extrusion and homeostasis in chloroplasts in a light-dependent manner to modulate photosynthesis. Prevents excessive induction of non-photochemical quenching (NPQ) under continuous-light conditions. Indirectly promotes efficient inorganic carbon uptake into chloroplasts. The polypeptide is Potassium/proton antiporter CemA (Gossypium hirsutum (Upland cotton)).